A 449-amino-acid polypeptide reads, in one-letter code: Chromosomal replication initiator protein DnaA (449 aa).

The segment at 1 to 69 (MEKVWLEAQS…VEAISSLTSV (69 aa)) is domain I, interacts with DnaA modulators. A domain II region spans residues 69–112 (VKYQIEFKITEKIPLESKPVDNFTPVIKDNEPSKETNKNIDITA). A domain III, AAA+ region region spans residues 113–329 (NLNPKYTFDS…GMLIRLGAYA (217 aa)). Positions 157, 159, 160, and 161 each coordinate ATP. The tract at residues 330 to 449 (SLTGSEITLN…VENLKKELIT (120 aa)) is domain IV, binds dsDNA.

The protein belongs to the DnaA family. Oligomerizes as a right-handed, spiral filament on DNA at oriC.

Its subcellular location is the cytoplasm. Its function is as follows. Plays an essential role in the initiation and regulation of chromosomal replication. ATP-DnaA binds to the origin of replication (oriC) to initiate formation of the DNA replication initiation complex once per cell cycle. Binds the DnaA box (a 9 base pair repeat at the origin) and separates the double-stranded (ds)DNA. Forms a right-handed helical filament on oriC DNA; dsDNA binds to the exterior of the filament while single-stranded (ss)DNA is stabiized in the filament's interior. The ATP-DnaA-oriC complex binds and stabilizes one strand of the AT-rich DNA unwinding element (DUE), permitting loading of DNA polymerase. After initiation quickly degrades to an ADP-DnaA complex that is not apt for DNA replication. Binds acidic phospholipids. The sequence is that of Chromosomal replication initiator protein DnaA from Geotalea uraniireducens (strain Rf4) (Geobacter uraniireducens).